A 242-amino-acid polypeptide reads, in one-letter code: tRNA (guanine-N(1)-)-methyltransferase (242 aa).

Residues Gly111 and 130 to 135 (IGDYVL) each bind S-adenosyl-L-methionine.

This sequence belongs to the RNA methyltransferase TrmD family. As to quaternary structure, homodimer.

The protein localises to the cytoplasm. It carries out the reaction guanosine(37) in tRNA + S-adenosyl-L-methionine = N(1)-methylguanosine(37) in tRNA + S-adenosyl-L-homocysteine + H(+). In terms of biological role, specifically methylates guanosine-37 in various tRNAs. The polypeptide is tRNA (guanine-N(1)-)-methyltransferase (Onion yellows phytoplasma (strain OY-M)).